The following is a 228-amino-acid chain: Probable septum site-determining protein MinC (228 aa).

Belongs to the MinC family. In terms of assembly, interacts with MinD and FtsZ.

Its function is as follows. Cell division inhibitor that blocks the formation of polar Z ring septums. Rapidly oscillates between the poles of the cell to destabilize FtsZ filaments that have formed before they mature into polar Z rings. Prevents FtsZ polymerization. In Bacillus cereus (strain B4264), this protein is Probable septum site-determining protein MinC.